The primary structure comprises 1070 residues: DNA-directed RNA polymerase subunit beta (1070 aa).

Belongs to the RNA polymerase beta chain family. As to quaternary structure, in plastids the minimal PEP RNA polymerase catalytic core is composed of four subunits: alpha, beta, beta', and beta''. When a (nuclear-encoded) sigma factor is associated with the core the holoenzyme is formed, which can initiate transcription.

It localises to the plastid. The protein resides in the chloroplast. It carries out the reaction RNA(n) + a ribonucleoside 5'-triphosphate = RNA(n+1) + diphosphate. Its function is as follows. DNA-dependent RNA polymerase catalyzes the transcription of DNA into RNA using the four ribonucleoside triphosphates as substrates. The sequence is that of DNA-directed RNA polymerase subunit beta from Solanum lycopersicum (Tomato).